A 268-amino-acid polypeptide reads, in one-letter code: Tryptophan synthase alpha chain (268 aa).

Active-site proton acceptor residues include glutamate 49 and aspartate 60.

The protein belongs to the TrpA family. Tetramer of two alpha and two beta chains.

It catalyses the reaction (1S,2R)-1-C-(indol-3-yl)glycerol 3-phosphate + L-serine = D-glyceraldehyde 3-phosphate + L-tryptophan + H2O. Its pathway is amino-acid biosynthesis; L-tryptophan biosynthesis; L-tryptophan from chorismate: step 5/5. In terms of biological role, the alpha subunit is responsible for the aldol cleavage of indoleglycerol phosphate to indole and glyceraldehyde 3-phosphate. The polypeptide is Tryptophan synthase alpha chain (Xylella fastidiosa (strain 9a5c)).